A 327-amino-acid polypeptide reads, in one-letter code: Olfactory receptor 226 (327 aa).

Residues 1–26 (MERRNHSGRVSEFVLLGFPAPAPLRV) lie on the Extracellular side of the membrane. Asparagine 5 carries N-linked (GlcNAc...) asparagine glycosylation. The helical transmembrane segment at 27–50 (LLFFLSLLAYVLVLTENMLIIIAI) threads the bilayer. The Cytoplasmic segment spans residues 51 to 58 (RNHPTLHK). Residues 59 to 80 (PMYFFLANMSFLEIWYVTVTIP) traverse the membrane as a helical segment. The Extracellular segment spans residues 81 to 104 (KMLAGFIGSKENHGQLISFEACMT). The cysteines at positions 102 and 194 are disulfide-linked. A helical transmembrane segment spans residues 105-125 (QLYFFLGLGCTECVLLAVMAY). Topologically, residues 126 to 144 (DRYVAICHPLHYPVIVSSR) are cytoplasmic. A helical transmembrane segment spans residues 145 to 163 (LCVQMAAGSWAGGFGISMV). Topologically, residues 164-201 (KVFLISRLSYCGPNTINHFFCDVSPLLNLSCTDMSTAE) are extracellular. The chain crosses the membrane as a helical span at residues 202-224 (LTDFVLAIFILLGPLSVTGASYM). Residues 225–241 (AITGAVMRIPSAAGRHK) are Cytoplasmic-facing. A helical transmembrane segment spans residues 242–265 (AFSTCASHLTVVIIFYAASIFIYA). Topologically, residues 266-277 (RPKALSAFDTNK) are extracellular. The chain crosses the membrane as a helical span at residues 278–297 (LVSVLYAVIVPLFNPIIYCL). Residues 298-327 (RNQDVKRALRRTLHLAQDQEANTNKGSKNG) lie on the Cytoplasmic side of the membrane.

This sequence belongs to the G-protein coupled receptor 1 family. Olfactory epithelium.

It is found in the cell membrane. Its function is as follows. Odorant receptor. The chain is Olfactory receptor 226 (Olr226) from Rattus norvegicus (Rat).